A 238-amino-acid chain; its full sequence is Ribitol-5-phosphate cytidylyltransferase 2 (238 aa).

Residues 7 to 10 (LAGG) and 81 to 87 (GTDRNET) contribute to the CTP site.

This sequence belongs to the IspD/TarI cytidylyltransferase family. TarI subfamily. As to quaternary structure, heterodimer together with TarJ.

It carries out the reaction D-ribitol 5-phosphate + CTP + H(+) = CDP-L-ribitol + diphosphate. It participates in cell wall biogenesis; poly(ribitol phosphate) teichoic acid biosynthesis. Catalyzes the transfer of the cytidylyl group of CTP to D-ribitol 5-phosphate. The polypeptide is Ribitol-5-phosphate cytidylyltransferase 2 (Staphylococcus aureus (strain NCTC 8325 / PS 47)).